Reading from the N-terminus, the 131-residue chain is Plastocyanin (131 aa).

An N-terminal signal peptide occupies residues 1 to 34; that stretch reads MKFFASLSKRFAPVLSLVVLVAGTLLLSAAPASA. Positions 35–131 constitute a Plastocyanin-like domain; the sequence is ATVQIKMGTD…AGMVGTITVE (97 aa). Cu cation-binding residues include His-73, Cys-116, His-119, and Met-124.

Belongs to the plastocyanin family. It depends on Cu(2+) as a cofactor.

It is found in the cellular thylakoid membrane. Its function is as follows. Participates in electron transfer between P700 and the cytochrome b6-f complex in photosystem I. This chain is Plastocyanin (petE), found in Prochlorothrix hollandica.